The following is a 142-amino-acid chain: Small ribosomal subunit protein eS6 (142 aa).

The segment at 117 to 142 (EKPLDELAPKKEKKEGAAGGRAPAKK) is disordered. A compositionally biased stretch (basic and acidic residues) spans 118 to 132 (KPLDELAPKKEKKEG).

It belongs to the eukaryotic ribosomal protein eS6 family.

The polypeptide is Small ribosomal subunit protein eS6 (Methanocella arvoryzae (strain DSM 22066 / NBRC 105507 / MRE50)).